A 622-amino-acid chain; its full sequence is Chaperone protein HscA homolog (622 aa).

This sequence belongs to the heat shock protein 70 family.

Chaperone involved in the maturation of iron-sulfur cluster-containing proteins. Has a low intrinsic ATPase activity which is markedly stimulated by HscB. The chain is Chaperone protein HscA homolog from Burkholderia cenocepacia (strain ATCC BAA-245 / DSM 16553 / LMG 16656 / NCTC 13227 / J2315 / CF5610) (Burkholderia cepacia (strain J2315)).